The primary structure comprises 174 residues: Large ribosomal subunit protein uL16 (174 aa).

The protein belongs to the universal ribosomal protein uL16 family.

This chain is Large ribosomal subunit protein uL16, found in Archaeoglobus fulgidus (strain ATCC 49558 / DSM 4304 / JCM 9628 / NBRC 100126 / VC-16).